The sequence spans 537 residues: Beta-1-syntrophin (537 aa).

Residue Ala2 is modified to N-acetylalanine. 2 PH domains span residues 18-297 and 321-432; these read RAQR…SNAG and EIRH…QGCH. 3 positions are modified to phosphoserine: Ser86, Ser125, and Ser204. Residues 111-194 form the PDZ domain; sequence GVKVLKQELG…EVLLEVKYMR (84 aa). Positions 204–233 are disordered; the sequence is SPVSEIGWETPPPESPRLGGGSAEPLSSQS. Position 213 is a phosphothreonine (Thr213). Residues Ser218, Ser225, Ser231, Ser235, and Ser388 each carry the phosphoserine modification. The region spanning 481-537 is the SU domain; that stretch reads PYEKLKMSSDDGIRMLYLDFGGKEGEIQLDLHSCPKPIVFIIHSFLSAKITRLGLVA. Residues 517–537 are calmodulin-binding; that stretch reads PIVFIIHSFLSAKITRLGLVA.

The protein belongs to the syntrophin family. In terms of assembly, monomer and homodimer. Interacts with the viral HTLV-1 TAX protein and other members of the syntrophin family: SNTA1 and SNTB2. Interacts with the dystrophin protein DMD and related proteins DTNA and UTRN and with the sodium channel proteins SCN4A and SCN5A. Interacts with DTNB. Post-translationally, phosphorylated by CaM-kinase II. Ubiquitous. Expressed at high levels in the liver.

It localises to the cell membrane. The protein localises to the sarcolemma. Its subcellular location is the cell junction. It is found in the cytoplasm. The protein resides in the cytoskeleton. In terms of biological role, adapter protein that binds to and probably organizes the subcellular localization of a variety of membrane proteins. May link various receptors to the actin cytoskeleton and the dystrophin glycoprotein complex. The chain is Beta-1-syntrophin (Sntb1) from Mus musculus (Mouse).